Reading from the N-terminus, the 175-residue chain is Acireductone dioxygenase (175 aa).

Histidine 81, histidine 83, glutamate 87, and histidine 126 together coordinate Fe(2+). Histidine 81, histidine 83, glutamate 87, and histidine 126 together coordinate Ni(2+).

It belongs to the acireductone dioxygenase (ARD) family. Fe(2+) is required as a cofactor. Ni(2+) serves as cofactor.

It is found in the cytoplasm. The protein resides in the nucleus. The catalysed reaction is 1,2-dihydroxy-5-(methylsulfanyl)pent-1-en-3-one + O2 = 4-methylsulfanyl-2-oxobutanoate + formate + 2 H(+). The enzyme catalyses 1,2-dihydroxy-5-(methylsulfanyl)pent-1-en-3-one + O2 = 3-(methylsulfanyl)propanoate + CO + formate + 2 H(+). Its pathway is amino-acid biosynthesis; L-methionine biosynthesis via salvage pathway; L-methionine from S-methyl-5-thio-alpha-D-ribose 1-phosphate: step 5/6. Functionally, catalyzes 2 different reactions between oxygen and the acireductone 1,2-dihydroxy-3-keto-5-methylthiopentene (DHK-MTPene) depending upon the metal bound in the active site. Fe-containing acireductone dioxygenase (Fe-ARD) produces formate and 2-keto-4-methylthiobutyrate (KMTB), the alpha-ketoacid precursor of methionine in the methionine recycle pathway. Ni-containing acireductone dioxygenase (Ni-ARD) produces methylthiopropionate, carbon monoxide and formate, and does not lie on the methionine recycle pathway. The polypeptide is Acireductone dioxygenase (Phaeosphaeria nodorum (strain SN15 / ATCC MYA-4574 / FGSC 10173) (Glume blotch fungus)).